The sequence spans 492 residues: KAT8 regulatory NSL complex subunit 2 (492 aa).

K78 is covalently cross-linked (Glycyl lysine isopeptide (Lys-Gly) (interchain with G-Cter in SUMO2)). Residues 126 to 182 (ELGSQTPESSRSEASRILDEDSWSDGEQEPITVDQTWRGDPDSEADSIDRDQEDPLK) form a disordered region. T131 carries the post-translational modification Phosphothreonine. Over residues 135-144 (SRSEASRILD) the composition is skewed to basic and acidic residues. S147, S149, S168, and S172 each carry phosphoserine. The span at 162–182 (WRGDPDSEADSIDRDQEDPLK) shows a compositional bias: basic and acidic residues. The segment at 308–364 (DVRCSNQSLPMTRHCLTHICQDTNRVLFKCCQGSEEVPCNKPVPVSLSEDPCCPLHF) is required for interaction with other NSL complex members. Residues 453 to 492 (QMAGDGCRSQGPRNSEKAPAPLSQSGIATANGKPEPTSVS) are disordered.

In terms of assembly, component of the NSL complex at least composed of KAT8/MOF, KANSL1, KANSL2, KANSL3, MCRS1, PHF20, OGT1/OGT, WDR5 and HCFC1. As to expression, ubiquitously expressed.

It localises to the nucleus. The protein localises to the mitochondrion. Functionally, non-catalytic component of the NSL histone acetyltransferase complex, a multiprotein complex that mediates histone H4 acetylation at 'Lys-5'- and 'Lys-8' (H4K5ac and H4K8ac) at transcription start sites and promotes transcription initiation. Required for NSL complex stability and for transcription of intraciliary transport genes in both ciliated and non-ciliated cells by regulating histone H4 acetylation at 'Lys-5'- and 'Lys-12' (H4K5ac and H4K12ac). This is necessary for cilium assembly in ciliated cells and for organization of the microtubule cytoskeleton in non-ciliated cells. Required within the NSL complex to maintain nuclear architecture stability by promoting KAT8-mediated acetylation of lamin LMNA. This is KAT8 regulatory NSL complex subunit 2 (KANSL2) from Capra hircus (Goat).